A 450-amino-acid polypeptide reads, in one-letter code: Trehalose/maltose-binding protein MalE (450 aa).

A signal peptide spans 1 to 24 (MNVKKVLLGLFLVGVLGIAVVASG). The alpha,alpha-trehalose site is built by Glu-57, Thr-84, Arg-89, Asp-110, Tyr-161, Asp-163, Tyr-217, Glu-279, Trp-297, Tyr-299, Gly-334, Trp-335, Trp-371, and Arg-404.

It belongs to the bacterial solute-binding protein 1 family. As to quaternary structure, the complex is composed of two ATP-binding proteins (MalK), two transmembrane proteins (MalG and MalF) and a solute-binding protein (MalE). Post-translationally, glycosylated.

It localises to the cell membrane. In terms of biological role, part of the ABC transporter complex MalEFGK involved in trehalose/maltose import. Binds maltose and trehalose. This is Trehalose/maltose-binding protein MalE (malE) from Thermococcus litoralis (strain ATCC 51850 / DSM 5473 / JCM 8560 / NS-C).